The sequence spans 156 residues: Small ribosomal subunit protein uS7 (156 aa).

This sequence belongs to the universal ribosomal protein uS7 family. As to quaternary structure, part of the 30S ribosomal subunit. Contacts proteins S9 and S11.

Functionally, one of the primary rRNA binding proteins, it binds directly to 16S rRNA where it nucleates assembly of the head domain of the 30S subunit. Is located at the subunit interface close to the decoding center, probably blocks exit of the E-site tRNA. The protein is Small ribosomal subunit protein uS7 of Synechococcus sp. (strain CC9902).